The following is a 130-amino-acid chain: Small ribosomal subunit protein uS9 (130 aa).

This sequence belongs to the universal ribosomal protein uS9 family.

The protein is Small ribosomal subunit protein uS9 of Clostridioides difficile (strain 630) (Peptoclostridium difficile).